Reading from the N-terminus, the 278-residue chain is Nucleotide-binding protein LHK_02029 (278 aa).

8–15 provides a ligand contact to ATP; it reads GLAGSGKS. 57–60 serves as a coordination point for GTP; sequence DTRD.

The protein belongs to the RapZ-like family.

Displays ATPase and GTPase activities. The sequence is that of Nucleotide-binding protein LHK_02029 from Laribacter hongkongensis (strain HLHK9).